Consider the following 314-residue polypeptide: Olfactory receptor 10T2 (314 aa).

Over 1-26 the chain is Extracellular; it reads MRGFNKTTVVTQFILVGFSSLGELQL. A glycan (N-linked (GlcNAc...) asparagine) is linked at Asn-5. Residues 27-47 traverse the membrane as a helical segment; it reads LLFVIFLLLYLTILVANVTIM. Residues 48 to 55 are Cytoplasmic-facing; sequence AVIRFSWT. Residues 56 to 76 traverse the membrane as a helical segment; sequence LHTPMYGFLFILSFSESCYTF. Residues 77 to 100 are Extracellular-facing; it reads VIIPQLLVHLLSDTKTISFMACAT. Residues Cys-98 and Cys-190 are joined by a disulfide bond. Residues 101 to 121 traverse the membrane as a helical segment; that stretch reads QLFFFLGFACTNCLLIAVMGY. The Cytoplasmic portion of the chain corresponds to 122-140; sequence DRYVAICHPLRYTLIINKR. The chain crosses the membrane as a helical span at residues 141–161; the sequence is LGLELISLSGATGFFIALVAT. Residues 162-198 are Extracellular-facing; it reads NLICDMRFCGPNRVNHYFCDMAPVIKLACTDTHVKEL. A helical transmembrane segment spans residues 199–218; that stretch reads ALFSLSILVIMVPFLLILIS. The Cytoplasmic segment spans residues 219–237; sequence YGFIVNTILKIPSAEGKKA. The chain crosses the membrane as a helical span at residues 238-258; the sequence is FVTCASHLTVVFVHYGCASII. Over 259-271 the chain is Extracellular; the sequence is YLRPKSKSASDKD. A helical membrane pass occupies residues 272-292; that stretch reads QLVAVTYTVVTPLLNPLVYSL. Topologically, residues 293–314 are cytoplasmic; sequence RNKEVKTALKRVLGMPVATKMS.

Belongs to the G-protein coupled receptor 1 family.

It is found in the cell membrane. Its function is as follows. Odorant receptor. In Homo sapiens (Human), this protein is Olfactory receptor 10T2 (OR10T2).